The following is a 340-amino-acid chain: 4-hydroxy-3-methylbut-2-enyl diphosphate reductase (340 aa).

Cys19 is a [4Fe-4S] cluster binding site. Positions 50 and 90 each coordinate (2E)-4-hydroxy-3-methylbut-2-enyl diphosphate. Positions 50 and 90 each coordinate dimethylallyl diphosphate. Residues His50 and His90 each contribute to the isopentenyl diphosphate site. [4Fe-4S] cluster is bound at residue Cys112. His141 contributes to the (2E)-4-hydroxy-3-methylbut-2-enyl diphosphate binding site. His141 provides a ligand contact to dimethylallyl diphosphate. Isopentenyl diphosphate is bound at residue His141. The active-site Proton donor is Glu143. Thr190 contributes to the (2E)-4-hydroxy-3-methylbut-2-enyl diphosphate binding site. Residue Cys220 coordinates [4Fe-4S] cluster. Ser248, Ser249, Asn250, and Ser292 together coordinate (2E)-4-hydroxy-3-methylbut-2-enyl diphosphate. Dimethylallyl diphosphate contacts are provided by Ser248, Ser249, Asn250, and Ser292. Isopentenyl diphosphate is bound by residues Ser248, Ser249, Asn250, and Ser292.

Belongs to the IspH family. It depends on [4Fe-4S] cluster as a cofactor.

It carries out the reaction isopentenyl diphosphate + 2 oxidized [2Fe-2S]-[ferredoxin] + H2O = (2E)-4-hydroxy-3-methylbut-2-enyl diphosphate + 2 reduced [2Fe-2S]-[ferredoxin] + 2 H(+). The catalysed reaction is dimethylallyl diphosphate + 2 oxidized [2Fe-2S]-[ferredoxin] + H2O = (2E)-4-hydroxy-3-methylbut-2-enyl diphosphate + 2 reduced [2Fe-2S]-[ferredoxin] + 2 H(+). Its pathway is isoprenoid biosynthesis; dimethylallyl diphosphate biosynthesis; dimethylallyl diphosphate from (2E)-4-hydroxy-3-methylbutenyl diphosphate: step 1/1. It participates in isoprenoid biosynthesis; isopentenyl diphosphate biosynthesis via DXP pathway; isopentenyl diphosphate from 1-deoxy-D-xylulose 5-phosphate: step 6/6. In terms of biological role, catalyzes the conversion of 1-hydroxy-2-methyl-2-(E)-butenyl 4-diphosphate (HMBPP) into a mixture of isopentenyl diphosphate (IPP) and dimethylallyl diphosphate (DMAPP). Acts in the terminal step of the DOXP/MEP pathway for isoprenoid precursor biosynthesis. This chain is 4-hydroxy-3-methylbut-2-enyl diphosphate reductase, found in Thermus thermophilus (strain ATCC BAA-163 / DSM 7039 / HB27).